The chain runs to 462 residues: GTPase Der (462 aa).

EngA-type G domains are found at residues 3–166 (PVIA…TTET) and 175–348 (IKIA…HSAI). GTP contacts are provided by residues 9-16 (GRPNVGKS), 56-60 (DTGGI), 118-121 (NKTD), 181-188 (GRPNVGKS), 228-232 (DTAGV), and 293-296 (NKWD). Residues 349–433 (QSFSTPKLTR…PLKIEFKGGQ (85 aa)) form the KH-like domain.

It belongs to the TRAFAC class TrmE-Era-EngA-EngB-Septin-like GTPase superfamily. EngA (Der) GTPase family. In terms of assembly, associates with the 50S ribosomal subunit.

In terms of biological role, GTPase that plays an essential role in the late steps of ribosome biogenesis. The sequence is that of GTPase Der from Legionella pneumophila (strain Paris).